We begin with the raw amino-acid sequence, 354 residues long: Isocitrate dehydrogenase [NAD] regulatory subunit A, mitochondrial (354 aa).

The substrate site is built by S95, N97, R101, R111, and R132. Mg(2+)-binding residues include D219, D243, and D247. NADP(+)-binding positions include H276–I282 and N289.

This sequence belongs to the isocitrate and isopropylmalate dehydrogenases family. As to quaternary structure, heterooligomer of catalytic and regulatory subunits. Mg(2+) is required as a cofactor. Requires Mn(2+) as cofactor.

The protein resides in the mitochondrion. It catalyses the reaction D-threo-isocitrate + NAD(+) = 2-oxoglutarate + CO2 + NADH. In terms of biological role, performs an essential role in the oxidative function of the citric acid cycle. This is Isocitrate dehydrogenase [NAD] regulatory subunit A, mitochondrial (idhA) from Dictyostelium discoideum (Social amoeba).